The primary structure comprises 385 residues: tRNA-specific 2-thiouridylase MnmA (385 aa).

Residues 29–36 (GLSGGVDS) and leucine 55 contribute to the ATP site. Cysteine 116 (nucleophile) is an active-site residue. Cysteine 116 and cysteine 225 are joined by a disulfide. ATP is bound at residue glycine 141. An interaction with tRNA region spans residues 175–177 (KDQ). The active-site Cysteine persulfide intermediate is the cysteine 225. An interaction with tRNA region spans residues 330 to 331 (RY).

The protein belongs to the MnmA/TRMU family.

The protein resides in the cytoplasm. The catalysed reaction is S-sulfanyl-L-cysteinyl-[protein] + uridine(34) in tRNA + AH2 + ATP = 2-thiouridine(34) in tRNA + L-cysteinyl-[protein] + A + AMP + diphosphate + H(+). Its function is as follows. Catalyzes the 2-thiolation of uridine at the wobble position (U34) of tRNA, leading to the formation of s(2)U34. The sequence is that of tRNA-specific 2-thiouridylase MnmA from Prochlorococcus marinus (strain AS9601).